Consider the following 216-residue polypeptide: ATP-dependent Clp protease proteolytic subunit (216 aa).

Ser-101 serves as the catalytic Nucleophile. His-126 is an active-site residue.

This sequence belongs to the peptidase S14 family. In terms of assembly, component of the chloroplastic Clp protease core complex.

The protein localises to the plastid. It is found in the chloroplast stroma. The catalysed reaction is Hydrolysis of proteins to small peptides in the presence of ATP and magnesium. alpha-casein is the usual test substrate. In the absence of ATP, only oligopeptides shorter than five residues are hydrolyzed (such as succinyl-Leu-Tyr-|-NHMec, and Leu-Tyr-Leu-|-Tyr-Trp, in which cleavage of the -Tyr-|-Leu- and -Tyr-|-Trp bonds also occurs).. In terms of biological role, cleaves peptides in various proteins in a process that requires ATP hydrolysis. Has a chymotrypsin-like activity. Plays a major role in the degradation of misfolded proteins. This Zea mays (Maize) protein is ATP-dependent Clp protease proteolytic subunit.